Here is a 747-residue protein sequence, read N- to C-terminus: Homeobox-leucine zipper protein GLABRA 2 (747 aa).

Positions 31 to 112 are disordered; it reads RNASSGSTNP…KKYHRHTTDQ (82 aa). The segment covering 58-68 has biased composition (polar residues); sequence EMSSENSGPTR. The span at 73 to 90 shows a compositional bias: acidic residues; the sequence is EDLEGEDHDDEEEEEEDG. Over residues 97–107 the composition is skewed to basic residues; sequence TNKRKRKKYHR. Positions 101-160 form a DNA-binding region, homeobox; the sequence is KRKKYHRHTTDQIRHMEALFKETPHPDEKQRQQLSKQLGLAPRQVKFWFQNRRTQIKAIQ. A coiled-coil region spans residues 155–223; it reads QIKAIQERHE…LDKLRAALGR (69 aa). Residues 250–489 form the START domain; that stretch reads FALEKSRIAE…LQLHCERLVF (240 aa).

It belongs to the HD-ZIP homeobox family. Class IV subfamily. In terms of assembly, interacts with GIR1 and GIR2. In terms of tissue distribution, expressed in individual developing trichome cells of the emerging leaf primordia. Expressed in differentiating hairless cells of root epidermis.

The protein resides in the nucleus. Transcription factor involved in the determination of epidermal cell identity. Required for correct morphological development and maturation of trichomes. Regulates the frequency of trichome initiation and determines trichome spacing. Acts as a negative factor for root hair development. Required for ectopic repression of root hair development in a subset of epidermal cells. May suppress hair formation in root epidermis by promoting differentiation into hairless epidermal cells. Directly suppresses the bHLH transcription factor genes, RHD6, RSL1, RSL2, LRL1, and LRL2, which have diverse functions in root hair development. Required for normal development of seed coat mucilage. Involved in the control of seed oil accumulation. Acts as a negative regulator of anthocyanin biosynthesis. May directly repress the expression of some component genes from the MYB-bHLH-WD40 (MBW) transcriptional activator complex. The MBW complex activates the transcription of late biosynthesis genes in the flavonoid pathway, leading to the production of anthocyanins. In Arabidopsis thaliana (Mouse-ear cress), this protein is Homeobox-leucine zipper protein GLABRA 2.